Here is a 388-residue protein sequence, read N- to C-terminus: Succinate--CoA ligase [ADP-forming] subunit beta (388 aa).

The ATP-grasp domain occupies 9–243; that stretch reads KQLFHRYGIP…ESQLAPLEVR (235 aa). ATP contacts are provided by residues lysine 45, 52–54, glutamate 98, valine 101, and glutamate 106; that span reads GRG. Asparagine 198 and aspartate 212 together coordinate Mg(2+). Residues asparagine 263 and 320-322 each bind substrate; that span reads GIM.

This sequence belongs to the succinate/malate CoA ligase beta subunit family. In terms of assembly, heterotetramer of two alpha and two beta subunits. Requires Mg(2+) as cofactor.

It carries out the reaction succinate + ATP + CoA = succinyl-CoA + ADP + phosphate. It catalyses the reaction GTP + succinate + CoA = succinyl-CoA + GDP + phosphate. It functions in the pathway carbohydrate metabolism; tricarboxylic acid cycle; succinate from succinyl-CoA (ligase route): step 1/1. In terms of biological role, succinyl-CoA synthetase functions in the citric acid cycle (TCA), coupling the hydrolysis of succinyl-CoA to the synthesis of either ATP or GTP and thus represents the only step of substrate-level phosphorylation in the TCA. The beta subunit provides nucleotide specificity of the enzyme and binds the substrate succinate, while the binding sites for coenzyme A and phosphate are found in the alpha subunit. The sequence is that of Succinate--CoA ligase [ADP-forming] subunit beta from Syntrophotalea carbinolica (strain DSM 2380 / NBRC 103641 / GraBd1) (Pelobacter carbinolicus).